We begin with the raw amino-acid sequence, 240 residues long: Ribosomal RNA small subunit methyltransferase G (240 aa).

S-adenosyl-L-methionine contacts are provided by residues glycine 78, phenylalanine 83, 129 to 130 (AE), and arginine 147. Residues 218 to 240 (RRQTSKKYPRKPGTPNKSPLLEN) are disordered.

Belongs to the methyltransferase superfamily. RNA methyltransferase RsmG family.

The protein localises to the cytoplasm. Functionally, specifically methylates the N7 position of guanine in position 535 of 16S rRNA. This chain is Ribosomal RNA small subunit methyltransferase G, found in Staphylococcus haemolyticus (strain JCSC1435).